The sequence spans 129 residues: Large ribosomal subunit protein bL20 (129 aa).

This sequence belongs to the bacterial ribosomal protein bL20 family.

Binds directly to 23S ribosomal RNA and is necessary for the in vitro assembly process of the 50S ribosomal subunit. It is not involved in the protein synthesizing functions of that subunit. This is Large ribosomal subunit protein bL20 from Mycobacteroides abscessus (strain ATCC 19977 / DSM 44196 / CCUG 20993 / CIP 104536 / JCM 13569 / NCTC 13031 / TMC 1543 / L948) (Mycobacterium abscessus).